A 206-amino-acid chain; its full sequence is Imidazoleglycerol-phosphate dehydratase (206 aa).

The interval 1–21 (MTALDSSRLLQPRTASVHRRT) is disordered.

Belongs to the imidazoleglycerol-phosphate dehydratase family.

The protein localises to the cytoplasm. It catalyses the reaction D-erythro-1-(imidazol-4-yl)glycerol 3-phosphate = 3-(imidazol-4-yl)-2-oxopropyl phosphate + H2O. It functions in the pathway amino-acid biosynthesis; L-histidine biosynthesis; L-histidine from 5-phospho-alpha-D-ribose 1-diphosphate: step 6/9. This Synechococcus sp. (strain JA-2-3B'a(2-13)) (Cyanobacteria bacterium Yellowstone B-Prime) protein is Imidazoleglycerol-phosphate dehydratase.